The sequence spans 335 residues: Legumin type B (335 aa).

Disordered regions lie at residues 47–87 and 102–155; these read PETQ…GNSV and TEED…GRNG. Over residues 105 to 118 the composition is skewed to basic and acidic residues; it reads DTAKRLRSPRDKRN. Residues 135–144 are compositionally biased toward acidic residues; it reads QQEEEEEEEE. One can recognise a Cupin type-1 domain in the interval 167–314; that stretch reads ENIAQPARAD…AFGLRQRQVT (148 aa).

Belongs to the 11S seed storage protein (globulins) family. In terms of assembly, hexamer; each subunit is composed of an acidic and a basic chain derived from a single precursor and linked by a disulfide bond.

This protein found in the seeds of many leguminous and non-leguminous plants is the source of sulfur-containing amino acids in seed meals. The chain is Legumin type B (LEB2) from Vicia faba (Broad bean).